A 319-amino-acid chain; its full sequence is MDFKDYYKILGVEPTADEKAIKAAYRKLARKYHPDVSKERDAEEKFKEANEAYEVLGDAQKRAEFDEIRKYGGQHGRPFQAPPGWESRGGGGGFEGGDFSDFFSSIFGGRSAGGNPFGGARQQQRSAGRRGQDVELELAVFLEETLSKESKQISFQVPQTNAMGQRTGFTTKTLNVRIPAGVTDGERIRLKGQGAPGSGGGANGDLFLTIRMAPHPLFDVEGHDLIITVPLAPWEAALGAKVAVPTLDGKINLTIRPDSQSGQRLRVPGKGLANKQGERGNLYAQLKVVMPPASDESARELWTKLSEKAAFNPRTQWSK.

Positions 5–69 (DYYKILGVEP…QKRAEFDEIR (65 aa)) constitute a J domain.

It is found in the cytoplasm. Its subcellular location is the nucleoid. Functionally, DNA-binding protein that preferentially recognizes a curved DNA sequence. It is probably a functional analog of DnaJ; displays overlapping activities with DnaJ, but functions under different conditions, probably acting as a molecular chaperone in an adaptive response to environmental stresses other than heat shock. Lacks autonomous chaperone activity; binds native substrates and targets them for recognition by DnaK. Its activity is inhibited by the binding of CbpM. The polypeptide is Curved DNA-binding protein (Pseudomonas putida (strain ATCC 47054 / DSM 6125 / CFBP 8728 / NCIMB 11950 / KT2440)).